Reading from the N-terminus, the 316-residue chain is 4-hydroxy-3-methylbut-2-enyl diphosphate reductase (316 aa).

Cys17 lines the [4Fe-4S] cluster pocket. Positions 46 and 79 each coordinate (2E)-4-hydroxy-3-methylbut-2-enyl diphosphate. His46 and His79 together coordinate dimethylallyl diphosphate. Positions 46 and 79 each coordinate isopentenyl diphosphate. A [4Fe-4S] cluster-binding site is contributed by Cys101. His129 is a binding site for (2E)-4-hydroxy-3-methylbut-2-enyl diphosphate. His129 lines the dimethylallyl diphosphate pocket. Residue His129 participates in isopentenyl diphosphate binding. Glu131 serves as the catalytic Proton donor. Thr170 is a binding site for (2E)-4-hydroxy-3-methylbut-2-enyl diphosphate. Cys200 provides a ligand contact to [4Fe-4S] cluster. Ser228, Ser229, Asn230, and Ser273 together coordinate (2E)-4-hydroxy-3-methylbut-2-enyl diphosphate. Dimethylallyl diphosphate contacts are provided by Ser228, Ser229, Asn230, and Ser273. The isopentenyl diphosphate site is built by Ser228, Ser229, Asn230, and Ser273.

This sequence belongs to the IspH family. [4Fe-4S] cluster is required as a cofactor.

The enzyme catalyses isopentenyl diphosphate + 2 oxidized [2Fe-2S]-[ferredoxin] + H2O = (2E)-4-hydroxy-3-methylbut-2-enyl diphosphate + 2 reduced [2Fe-2S]-[ferredoxin] + 2 H(+). The catalysed reaction is dimethylallyl diphosphate + 2 oxidized [2Fe-2S]-[ferredoxin] + H2O = (2E)-4-hydroxy-3-methylbut-2-enyl diphosphate + 2 reduced [2Fe-2S]-[ferredoxin] + 2 H(+). It functions in the pathway isoprenoid biosynthesis; dimethylallyl diphosphate biosynthesis; dimethylallyl diphosphate from (2E)-4-hydroxy-3-methylbutenyl diphosphate: step 1/1. It participates in isoprenoid biosynthesis; isopentenyl diphosphate biosynthesis via DXP pathway; isopentenyl diphosphate from 1-deoxy-D-xylulose 5-phosphate: step 6/6. Functionally, catalyzes the conversion of 1-hydroxy-2-methyl-2-(E)-butenyl 4-diphosphate (HMBPP) into a mixture of isopentenyl diphosphate (IPP) and dimethylallyl diphosphate (DMAPP). Acts in the terminal step of the DOXP/MEP pathway for isoprenoid precursor biosynthesis. This is 4-hydroxy-3-methylbut-2-enyl diphosphate reductase from Roseobacter denitrificans (strain ATCC 33942 / OCh 114) (Erythrobacter sp. (strain OCh 114)).